The primary structure comprises 44 residues: uncharacterized protein (44 aa).

This is an uncharacterized protein from Bacillus subtilis (Bacteriophage phi-105).